The sequence spans 259 residues: Phosphate import ATP-binding protein PstB (259 aa).

The region spanning 11–254 (AESKNLNFYY…PDNPRTEDYI (244 aa)) is the ABC transporter domain. Position 43-50 (43-50 (GPSGCGKS)) interacts with ATP.

It belongs to the ABC transporter superfamily. Phosphate importer (TC 3.A.1.7) family. The complex is composed of two ATP-binding proteins (PstB), two transmembrane proteins (PstC and PstA) and a solute-binding protein (PstS).

The protein resides in the cell inner membrane. The enzyme catalyses phosphate(out) + ATP + H2O = ADP + 2 phosphate(in) + H(+). Functionally, part of the ABC transporter complex PstSACB involved in phosphate import. Responsible for energy coupling to the transport system. The protein is Phosphate import ATP-binding protein PstB of Geobacter sulfurreducens (strain ATCC 51573 / DSM 12127 / PCA).